Here is a 356-residue protein sequence, read N- to C-terminus: MPEEKQKKSVLEKALKRIEENFGKGSIMILGDETQVQPVEVIPTGSLAIDIATGVGGYPRGRIVEIFGQESSGKTTLALHAIAEAQKMGGVAAFIDAEHALDPVYAKNLGVDLKSLLISQPDHGEQALEIVDELVRSGVVDLIVVDSVAALVPRAEIEGAMGDMQVGLQARLMSQALRKIAGSVNKSKAVVIFTNQIRMKIGVMFGSPETTTGGLALKFYATMRMEVRRGEPIKEGKDVIGNVINVKIVKNKVAPPFKTAQTYIIYGKGIDREYELFNIAVNEGIVDRKGSWYYYTTLKGEEVSLGQGSSNAVQFLKDNPEIAGEIERRIREKYGLLSVEKEEQRKEKKSSGEEAS.

68–75 (GQESSGKT) serves as a coordination point for ATP.

Belongs to the RecA family.

It is found in the cytoplasm. In terms of biological role, can catalyze the hydrolysis of ATP in the presence of single-stranded DNA, the ATP-dependent uptake of single-stranded DNA by duplex DNA, and the ATP-dependent hybridization of homologous single-stranded DNAs. It interacts with LexA causing its activation and leading to its autocatalytic cleavage. In Thermotoga sp. (strain RQ2), this protein is Protein RecA.